The following is a 288-amino-acid chain: MKLLLVFSLLIPSMVFANSSKFQQVEQDAKVIEASLSAHIGISVLDTQTGEYWDYNGNQRFPLTSTFKTIACAKLLYDAEQGEINPKSTIEIKKADLVTYSPVIEKQVGQAITLDDACFATMTTSDNAAANIILNALGGPESVTDFLRQIGDKETRLDRIEPELNEGKLGDLRDTTTPNAIVNTLNELLFGSTLSQDGQKKLEYWMVNNQVTGNLLRSVLPEGWNIADRSGAGGFGARSITAVVWSEAQSPIIVSIYLAQTEASIADRNDAIVKIGRSIFEVYSSQSR.

Positions 1–17 (MKLLLVFSLLIPSMVFA) are cleaved as a signal peptide. Ser-65 serves as the catalytic Acyl-ester intermediate. A disulfide bond links Cys-72 and Cys-118. Residue 229 to 231 (RSG) coordinates substrate.

This sequence belongs to the class-A beta-lactamase family.

The enzyme catalyses a beta-lactam + H2O = a substituted beta-amino acid. With respect to regulation, inhibited by clavulanic acid and sulbactam. In terms of biological role, hydrolyzes carbenicillin. Methicillin and oxacillin are weakly hydrolyzed. This chain is Beta-lactamase CARB-4 (carB4), found in Pseudomonas aeruginosa.